A 425-amino-acid chain; its full sequence is Enolase (425 aa).

Glutamine 163 serves as a coordination point for (2R)-2-phosphoglycerate. Residue glutamate 205 is the Proton donor of the active site. Positions 242, 285, and 312 each coordinate Mg(2+). Residues lysine 337, arginine 366, serine 367, and lysine 388 each contribute to the (2R)-2-phosphoglycerate site. Catalysis depends on lysine 337, which acts as the Proton acceptor.

It belongs to the enolase family. Mg(2+) serves as cofactor.

The protein localises to the cytoplasm. It is found in the secreted. Its subcellular location is the cell surface. The catalysed reaction is (2R)-2-phosphoglycerate = phosphoenolpyruvate + H2O. Its pathway is carbohydrate degradation; glycolysis; pyruvate from D-glyceraldehyde 3-phosphate: step 4/5. Functionally, catalyzes the reversible conversion of 2-phosphoglycerate (2-PG) into phosphoenolpyruvate (PEP). It is essential for the degradation of carbohydrates via glycolysis. This Acidiphilium cryptum (strain JF-5) protein is Enolase.